The primary structure comprises 236 residues: 2,3,4,5-tetrahydropyridine-2,6-dicarboxylate N-acetyltransferase (236 aa).

The protein belongs to the transferase hexapeptide repeat family. DapH subfamily.

The enzyme catalyses (S)-2,3,4,5-tetrahydrodipicolinate + acetyl-CoA + H2O = L-2-acetamido-6-oxoheptanedioate + CoA. It functions in the pathway amino-acid biosynthesis; L-lysine biosynthesis via DAP pathway; LL-2,6-diaminopimelate from (S)-tetrahydrodipicolinate (acetylase route): step 1/3. Catalyzes the transfer of an acetyl group from acetyl-CoA to tetrahydrodipicolinate. In Listeria monocytogenes serotype 4b (strain CLIP80459), this protein is 2,3,4,5-tetrahydropyridine-2,6-dicarboxylate N-acetyltransferase.